A 722-amino-acid chain; its full sequence is Ataxin-7-like protein 2 (722 aa).

Disordered stretches follow at residues 106 to 228 (LSKL…PPKT), 288 to 317 (NSRK…LPSS), 347 to 403 (SRAS…DCHY), and 531 to 600 (AITS…GCRG). The segment covering 181-191 (GKPPMAPPSKE) has biased composition (pro residues). The SCA7 domain occupies 230-297 (RKMARKECDL…NSRKGESPKE (68 aa)). A compositionally biased stretch (basic and acidic residues) spans 290–311 (RKGESPKEKSPGRKEQVLERPS). The span at 541–556 (PSPSFSKLPPSKASKS) shows a compositional bias: low complexity. The span at 558-569 (KGKDGVEVEAPS) shows a compositional bias: basic and acidic residues. Phosphoserine is present on serine 575.

The chain is Ataxin-7-like protein 2 (ATXN7L2) from Homo sapiens (Human).